The primary structure comprises 175 residues: uncharacterized protein (175 aa).

The Extracellular portion of the chain corresponds to 1 to 2; the sequence is ME. Residues 3–23 traverse the membrane as a helical segment; that stretch reads SIILSIAIFIGVLLGTSVGAG. At 24–151 the chain is on the cytoplasmic side; it reads SGSSISPDVD…TGISTTMNAR (128 aa). The interval 26-88 is disordered; the sequence is SSISPDVDAG…DVGAGSGSSI (63 aa). Positions 59–78 are enriched in polar residues; the sequence is FSGSSTSPDVDAGSGSSTSP. A helical membrane pass occupies residues 152 to 172; the sequence is VAVLITAAILSAPVTAIALLE. The Extracellular segment spans residues 173 to 175; sequence ARR.

The protein resides in the membrane. This is an uncharacterized protein from Saccharomyces cerevisiae (strain ATCC 204508 / S288c) (Baker's yeast).